Here is a 94-residue protein sequence, read N- to C-terminus: MIDLVKYPVSTEKSYRLIEKNQYTFDVDVRLTKPQIRKVFENLFDIKVLAVNTHLLPTKKKRLGLNLGFKTRYKRAIITIKANQTIPIFENSDS.

It belongs to the universal ribosomal protein uL23 family. As to quaternary structure, part of the 50S ribosomal subunit.

The protein resides in the plastid. It is found in the chloroplast. Functionally, binds to 23S rRNA. The polypeptide is Large ribosomal subunit protein uL23c (rpl23) (Tupiella akineta (Green alga)).